Here is a 324-residue protein sequence, read N- to C-terminus: Signal peptidase I (324 aa).

The Periplasmic portion of the chain corresponds to 1 to 3 (MAN). Residues 4–22 (MFALILVIATLVTGILWCV) traverse the membrane as a helical segment. Topologically, residues 23 to 58 (DKFVFAPKRRARQAAAQTASGDALDNATLNKVAPKP) are cytoplasmic. The helical transmembrane segment at 59–77 (GWLETGASVFPVLAIVLIV) threads the bilayer. At 78-324 (RSFLYEPFQI…VRLSRIGGIH (247 aa)) the chain is on the periplasmic side. Active-site residues include S91 and K146.

This sequence belongs to the peptidase S26 family.

Its subcellular location is the cell inner membrane. It catalyses the reaction Cleavage of hydrophobic, N-terminal signal or leader sequences from secreted and periplasmic proteins.. The protein is Signal peptidase I (lepB) of Salmonella typhi.